The primary structure comprises 290 residues: N-acetylmannosamine kinase (290 aa).

Residues 5–12 (AIDIGGTK) and 132–139 (GVGGGVVS) each bind ATP. His-156, Cys-166, Cys-168, and Cys-173 together coordinate Zn(2+).

Belongs to the ROK (NagC/XylR) family. NanK subfamily. As to quaternary structure, homodimer.

It carries out the reaction an N-acyl-D-mannosamine + ATP = an N-acyl-D-mannosamine 6-phosphate + ADP + H(+). Its pathway is amino-sugar metabolism; N-acetylneuraminate degradation; D-fructose 6-phosphate from N-acetylneuraminate: step 2/5. Catalyzes the phosphorylation of N-acetylmannosamine (ManNAc) to ManNAc-6-P. This is N-acetylmannosamine kinase from Citrobacter koseri (strain ATCC BAA-895 / CDC 4225-83 / SGSC4696).